The following is a 550-amino-acid chain: Chaperonin GroEL (550 aa).

Residues 30 to 33 (TLGP), lysine 51, 87 to 91 (DGTTT), glycine 415, and aspartate 495 contribute to the ATP site.

The protein belongs to the chaperonin (HSP60) family. In terms of assembly, forms a cylinder of 14 subunits composed of two heptameric rings stacked back-to-back. Interacts with the co-chaperonin GroES.

The protein resides in the cytoplasm. It carries out the reaction ATP + H2O + a folded polypeptide = ADP + phosphate + an unfolded polypeptide.. Its function is as follows. Together with its co-chaperonin GroES, plays an essential role in assisting protein folding. The GroEL-GroES system forms a nano-cage that allows encapsulation of the non-native substrate proteins and provides a physical environment optimized to promote and accelerate protein folding. This is Chaperonin GroEL from Shewanella piezotolerans (strain WP3 / JCM 13877).